The primary structure comprises 356 residues: Tyrosine recombinase XerS (356 aa).

Residues 16–121 (VMPPYVLEYY…ALSSLYKYLT (106 aa)) enclose the Core-binding (CB) domain. In terms of domain architecture, Tyr recombinase spans 169–354 (GFLDYIDSEY…INEEQKNALD (186 aa)). Catalysis depends on residues Arg210, Lys234, His306, Arg309, and His332. Tyr341 (O-(3'-phospho-DNA)-tyrosine intermediate) is an active-site residue.

Belongs to the 'phage' integrase family. XerS subfamily.

Its subcellular location is the cytoplasm. FtsK is required for recombination. Site-specific tyrosine recombinase, which acts by catalyzing the cutting and rejoining of the recombining DNA molecules. Essential to convert dimers of the bacterial chromosome into monomers to permit their segregation at cell division. In Lactococcus lactis subsp. cremoris (strain SK11), this protein is Tyrosine recombinase XerS.